A 212-amino-acid polypeptide reads, in one-letter code: Adapter protein MecA 2 (212 aa).

This sequence belongs to the MecA family. In terms of assembly, homodimer.

Functionally, enables the recognition and targeting of unfolded and aggregated proteins to the ClpC protease or to other proteins involved in proteolysis. Acts negatively in the development of competence by binding ComK and recruiting it to the ClpCP protease. When overexpressed, inhibits sporulation. Also involved in Spx degradation by ClpC. The protein is Adapter protein MecA 2 (mecA2) of Halalkalibacterium halodurans (strain ATCC BAA-125 / DSM 18197 / FERM 7344 / JCM 9153 / C-125) (Bacillus halodurans).